Consider the following 586-residue polypeptide: Kelch-like protein 7 (586 aa).

Residues 44 to 111 (CDVILMVQER…AYTARISVNS (68 aa)) enclose the BTB domain. A BACK domain is found at 146–248 (CLGISVLAEC…SKNFLSKTVQ (103 aa)). Kelch repeat units lie at residues 294–336 (RIAL…FWDN), 337–382 (VVYI…AAEG), 383–430 (KIYT…EANG), 431–481 (LIYV…FVKD), 483–528 (IFAV…AVGS), and 530–575 (VYVL…CVVD).

As to quaternary structure, homodimer. Component of the BCR(KLHL7) E3 ubiquitin ligase complex.

The protein localises to the nucleus. It is found in the cytoplasm. It participates in protein modification; protein ubiquitination. Its function is as follows. Substrate-specific adapter of a BCR (BTB-CUL3-RBX1) E3 ubiquitin ligase complex. The BCR(KLHL7) complex acts by mediating ubiquitination and subsequent degradation of substrate proteins. Probably mediates 'Lys-48'-linked ubiquitination. The polypeptide is Kelch-like protein 7 (KLHL7) (Gallus gallus (Chicken)).